The chain runs to 172 residues: Adenine phosphoribosyltransferase (172 aa).

The protein belongs to the purine/pyrimidine phosphoribosyltransferase family. In terms of assembly, homodimer.

The protein localises to the cytoplasm. It carries out the reaction AMP + diphosphate = 5-phospho-alpha-D-ribose 1-diphosphate + adenine. The protein operates within purine metabolism; AMP biosynthesis via salvage pathway; AMP from adenine: step 1/1. Catalyzes a salvage reaction resulting in the formation of AMP, that is energically less costly than de novo synthesis. In Methanococcus maripaludis (strain C5 / ATCC BAA-1333), this protein is Adenine phosphoribosyltransferase.